The following is a 90-amino-acid chain: Probable Fe(2+)-trafficking protein (90 aa).

The protein belongs to the Fe(2+)-trafficking protein family.

Its function is as follows. Could be a mediator in iron transactions between iron acquisition and iron-requiring processes, such as synthesis and/or repair of Fe-S clusters in biosynthetic enzymes. The chain is Probable Fe(2+)-trafficking protein from Variovorax paradoxus (strain S110).